Here is a 227-residue protein sequence, read N- to C-terminus: Orotate phosphoribosyltransferase 2 (227 aa).

An orotate-binding site is contributed by 41–42; the sequence is FF. 5-phospho-alpha-D-ribose 1-diphosphate contacts are provided by residues 79 to 80, R109, K110, K113, H115, and 135 to 143; these read YK and DDVMTAGTA. Positions 139 and 167 each coordinate orotate.

It belongs to the purine/pyrimidine phosphoribosyltransferase family. PyrE subfamily. Homodimer.

It catalyses the reaction orotidine 5'-phosphate + diphosphate = orotate + 5-phospho-alpha-D-ribose 1-diphosphate. It functions in the pathway pyrimidine metabolism; UMP biosynthesis via de novo pathway; UMP from orotate: step 1/2. In terms of biological role, catalyzes the transfer of a ribosyl phosphate group from 5-phosphoribose 1-diphosphate to orotate, leading to the formation of orotidine monophosphate (OMP). This Saccharomyces cerevisiae (strain ATCC 204508 / S288c) (Baker's yeast) protein is Orotate phosphoribosyltransferase 2 (URA10).